We begin with the raw amino-acid sequence, 27 residues long: AnmTX Sco 9a-1 (27 aa).

Hydroxyproline is present on Pro6. 2 disulfide bridges follow: Cys7-Cys18 and Cys10-Cys25.

In terms of biological role, has analgesic and anti-inflammatory activity in vivo. At a dose of 0.1 and 1 mg/kg, exhibits anti-inflammatory activity by reducing the volume of edema during 24 h better than the nonsteroidal anti-inflammatory drug, Diclofenac, at dose of 1 mg/kg in a mouse model of acute local lambda-carrageenan-induced inflammation. At a dose of 1 mg/kg, reduces the content of tumor necrosis factor-alpha (TNF-alpha). Demonstrates a significant analgesic effect on acute pain sensitivity in the carrageenan-induced thermal hyperalgesia model at doses of 0.1 and 1 mg/kg. Not toxic in mice, however stimulates exploratory motivation and active search behavior, and demonstrates an anti-anxiety effect. Does not exhibit any effect on currents of rat acid-sensing ion channels ASIC1a or ASIC3. The chain is AnmTX Sco 9a-1 from Stomphia coccinea (Spotted swimming anemone).